The following is a 192-amino-acid chain: Interferon (192 aa).

The first 30 residues, methionine 1–alanine 30, serve as a signal peptide directing secretion. Disulfide bonds link cysteine 31/cysteine 128, cysteine 60/cysteine 154, and cysteine 67/cysteine 167. Residues asparagine 70 and asparagine 77 are each glycosylated (N-linked (GlcNAc...) asparagine).

It belongs to the alpha/beta interferon family.

The protein localises to the secreted. Its function is as follows. Has antiviral activities. This Meleagris gallopavo (Wild turkey) protein is Interferon.